The following is a 67-amino-acid chain: UPF0437 protein y4xE (67 aa).

This sequence belongs to the UPF0437 family.

The protein is UPF0437 protein y4xE of Sinorhizobium fredii (strain NBRC 101917 / NGR234).